A 347-amino-acid polypeptide reads, in one-letter code: (RS)-norcoclaurine 6-O-methyltransferase (347 aa).

Residues Gly-192, Asp-215, Asp-235, Met-236, and Lys-249 each contribute to the S-adenosyl-L-methionine site. His-253 (proton acceptor) is an active-site residue.

This sequence belongs to the class I-like SAM-binding methyltransferase superfamily. Cation-independent O-methyltransferase family. COMT subfamily. In terms of assembly, homodimer.

The enzyme catalyses norcoclaurine + S-adenosyl-L-methionine = coclaurine + S-adenosyl-L-homocysteine + H(+). The protein operates within alkaloid biosynthesis; (S)-reticuline biosynthesis; (S)-reticuline from (S)-norcoclaurine: step 1/4. Its function is as follows. Catalyzes the transfer of the S-methyl group of S-adenosyl-L-methionine (AdoMet) to the 6-hydroxyl group of norcoclaurine to form coclaurine. This chain is (RS)-norcoclaurine 6-O-methyltransferase, found in Coptis japonica (Japanese goldthread).